The chain runs to 215 residues: Nucleoredoxin-like protein 1 (215 aa).

The 165-residue stretch at Met1–Leu165 folds into the Thioredoxin; atypical domain. Residues Ile185–Glu194 show a composition bias toward basic and acidic residues. Residues Ile185 to Phe215 form a disordered region.

This sequence belongs to the nucleoredoxin family.

The protein localises to the cell projection. The protein resides in the cilium. Its subcellular location is the photoreceptor outer segment. Its function is as follows. Plays an important role in retinal cone photoreceptor survival. May play a role in cone cell viability, slowing down cone degeneration, does not seem to play a role in degenerating rods. This is Nucleoredoxin-like protein 1 (nxnl1) from Xenopus laevis (African clawed frog).